We begin with the raw amino-acid sequence, 223 residues long: MRGLFVTGTDTGVGKTEVACALVRAARAAGLDAVGMKPAQSGHVAGEPSDAERLREASGGVEPLEAICPYTFAAPLAPAAAARAEGREVSLARVVEAARALAARHAAVVVEGAGGLLVPLTARETHADLAAALGLPVLVVARAGLGTVNHTALTVEALERRGLPIAGIVLNRTGPEDDPSVPLNAAEIARLTHREPLALLPWEPDIARRARALGSVLAAKIQF.

Residue Thr16 participates in Mg(2+) binding. Lys37 is an active-site residue. Ser41 is a binding site for substrate. Mg(2+)-binding residues include Asp50 and Glu111. ATP is bound by residues Asp50, 111–114, and 171–172; these read EGAG and NR.

This sequence belongs to the dethiobiotin synthetase family. In terms of assembly, homodimer. Mg(2+) serves as cofactor.

The protein resides in the cytoplasm. The enzyme catalyses (7R,8S)-7,8-diammoniononanoate + CO2 + ATP = (4R,5S)-dethiobiotin + ADP + phosphate + 3 H(+). It participates in cofactor biosynthesis; biotin biosynthesis; biotin from 7,8-diaminononanoate: step 1/2. In terms of biological role, catalyzes a mechanistically unusual reaction, the ATP-dependent insertion of CO2 between the N7 and N8 nitrogen atoms of 7,8-diaminopelargonic acid (DAPA, also called 7,8-diammoniononanoate) to form a ureido ring. The chain is ATP-dependent dethiobiotin synthetase BioD from Anaeromyxobacter dehalogenans (strain 2CP-C).